Reading from the N-terminus, the 342-residue chain is Tryptophan--tRNA ligase (342 aa).

ATP is bound by residues 19 to 21 and 27 to 28; these read QPS and GN. A 'HIGH' region motif is present at residues 20-28; sequence PSGELTIGN. D143 contributes to the L-tryptophan binding site. Residues 155–157, V194, and 203–207 each bind ATP; these read GED and KMSKS. Positions 203 to 207 match the 'KMSKS' region motif; it reads KMSKS.

This sequence belongs to the class-I aminoacyl-tRNA synthetase family. Homodimer.

It localises to the cytoplasm. It carries out the reaction tRNA(Trp) + L-tryptophan + ATP = L-tryptophyl-tRNA(Trp) + AMP + diphosphate + H(+). In terms of biological role, catalyzes the attachment of tryptophan to tRNA(Trp). The chain is Tryptophan--tRNA ligase from Yersinia pestis.